A 207-amino-acid polypeptide reads, in one-letter code: Putative 3-methyladenine DNA glycosylase (207 aa).

The protein belongs to the DNA glycosylase MPG family.

This Burkholderia lata (strain ATCC 17760 / DSM 23089 / LMG 22485 / NCIMB 9086 / R18194 / 383) protein is Putative 3-methyladenine DNA glycosylase.